The chain runs to 273 residues: SPRY domain-containing SOCS box protein 4 (273 aa).

Residues 34-233 (PARLDQLLDM…MRYINGLDPE (200 aa)) enclose the B30.2/SPRY domain. An SOCS box domain is found at 234–273 (PLPLMDLCRRSIRSALGRQRLRDIGSLPLPQSLKNYLQYQ).

It belongs to the SPSB family. Component of the probable ECS(SPSB4) E3 ubiquitin-protein ligase complex which contains CUL5, RNF7/RBX2, Elongin BC complex and SPSB4. Interacts with CUL5; RNF7; ELOB and ELOC. Interacts with MET. Interacts (via B30.2/SPRY domain) with PAWR; this interaction occurs in association with the Elongin BC complex. Interacts with NOS2. Interacts with EPHB2.

Its subcellular location is the cytoplasm. The protein resides in the cytosol. It functions in the pathway protein modification; protein ubiquitination. Functionally, substrate recognition component of a SCF-like ECS (Elongin BC-CUL2/5-SOCS-box protein) E3 ubiquitin-protein ligase complex which mediates the ubiquitination and subsequent proteasomal degradation of target proteins. Negatively regulates nitric oxide (NO) production and limits cellular toxicity in activated macrophages by mediating the ubiquitination and proteasomal degradation of NOS2. Acts as a bridge which links NOS2 with the ECS E3 ubiquitin ligase complex components ELOC and CUL5. Diminishes EphB2-dependent cell repulsive responses by mediating the ubiquitination and degradation of the EphB2/CTF2. Regulates cellular clock function by mediating ubiquitination and proteasomal degradation of the circadian transcriptional repressor NR1D1. In Mus musculus (Mouse), this protein is SPRY domain-containing SOCS box protein 4 (Spsb4).